Consider the following 128-residue polypeptide: Protein ripply2 (128 aa).

Residues 1-64 form a disordered region; it reads MDTTESAESA…ALPSGPGMAE (64 aa). A compositionally biased stretch (low complexity) spans 17-28; that stretch reads PSRSRCPPSAQP. A WRPW motif motif is present at residues 34 to 37; it reads WRPW. The ripply homology domain stretch occupies residues 74 to 109; the sequence is HPVRLFWPKSKCYDYLYQEAETLLKNFPIQATISFY.

This sequence belongs to the ripply family. In terms of tissue distribution, expressed in the embryonic anterior presomitic mesoderm. First expressed in S-I at 8.5 dpc, where expression is maintained until 13.5 dpc, with an additional stripe of expression sometimes seen in the rostral part of S0 and S-I.

It localises to the nucleus. Functionally, plays a role in somitogenesis. Required for somite segregation and establishment of rostrocaudal polarity in somites. This is Protein ripply2 from Mus musculus (Mouse).